The chain runs to 453 residues: Tryptophan dimethylallyltransferase cnsF (453 aa).

L-tryptophan is bound by residues 84–85 and Glu93; that span reads IL. Substrate is bound by residues Arg104, Lys190, and Tyr192. L-tryptophan is bound by residues Tyr194 and Arg248. Residues Arg261, Lys263, Tyr265, Gln347, and Tyr349 each contribute to the substrate site.

This sequence belongs to the tryptophan dimethylallyltransferase family. In terms of assembly, homodimer.

It catalyses the reaction L-tryptophan + dimethylallyl diphosphate = 4-(3-methylbut-2-enyl)-L-tryptophan + diphosphate. It participates in alkaloid biosynthesis. Tryptophan dimethylallyltransferase; part of the gene cluster that mediates the biosynthesis of communesins, a prominent class of indole alkaloids with great potential as pharmaceuticals. Communesins are biosynthesized by the coupling of tryptamine and aurantioclavine, two building blocks derived from L-tryptophan. The L-tryptophan decarboxylase cnsB converts L-tryptophan to tryptamine, whereas the tryptophan dimethylallyltransferase cnsF converts L-tryptophan to 4-dimethylallyl tryptophan which is further transformed to aurantioclavine by the aurantioclavine synthase cnsA, probably aided by the catalase cnsD. The cytochrome P450 monooxygenase cnsC catalyzes the heterodimeric coupling between the two different indole moieties, tryptamine and aurantioclavine, to construct vicinal quaternary stereocenters and yield the heptacyclic communesin scaffold. The O-methyltransferase cnsE then methylates the communesin scaffold to produce communesin K, the simplest characterized communesin that contains the heptacyclic core. The dioxygenase cnsJ converts communesin K into communesin I. Acylation to introduce the hexadienyl group at position N16 of communesin I by the acyltransferase cnsK leads to the production of communesin B. The hexadienyl group is produced by the highly reducing polyketide synthase cnsI, before being hydrolytically removed from cnsI by the serine hydrolase cnsH, converted into hexadienyl-CoA by the CoA ligase cnsG, and then transferred to communesin I by cnsK. Surprisingly, cnsK may also be a promiscuous acyltransferase that can tolerate a range of acyl groups, including acetyl-, propionyl-, and butyryl-CoA, which lead to communesins A, G and H respectively. The roles of the alpha-ketoglutarate-dependent dioxygenases cnsM and cnsP have still to be determined. The polypeptide is Tryptophan dimethylallyltransferase cnsF (Penicillium expansum (Blue mold rot fungus)).